A 306-amino-acid chain; its full sequence is Porphobilinogen deaminase (306 aa).

At Cys-240 the chain carries S-(dipyrrolylmethanemethyl)cysteine.

This sequence belongs to the HMBS family. As to quaternary structure, monomer. It depends on dipyrromethane as a cofactor.

It catalyses the reaction 4 porphobilinogen + H2O = hydroxymethylbilane + 4 NH4(+). Its pathway is porphyrin-containing compound metabolism; protoporphyrin-IX biosynthesis; coproporphyrinogen-III from 5-aminolevulinate: step 2/4. Functionally, tetrapolymerization of the monopyrrole PBG into the hydroxymethylbilane pre-uroporphyrinogen in several discrete steps. This Thiobacillus denitrificans (strain ATCC 25259 / T1) protein is Porphobilinogen deaminase.